A 259-amino-acid chain; its full sequence is Phosphatidylserine decarboxylase proenzyme (259 aa).

Residues aspartate 86, histidine 142, and serine 226 each act as charge relay system; for autoendoproteolytic cleavage activity in the active site. Serine 226 acts as the Schiff-base intermediate with substrate; via pyruvic acid; for decarboxylase activity in catalysis. Residue serine 226 is modified to Pyruvic acid (Ser); by autocatalysis.

The protein belongs to the phosphatidylserine decarboxylase family. PSD-B subfamily. Prokaryotic type I sub-subfamily. Heterodimer of a large membrane-associated beta subunit and a small pyruvoyl-containing alpha subunit. Pyruvate is required as a cofactor. Is synthesized initially as an inactive proenzyme. Formation of the active enzyme involves a self-maturation process in which the active site pyruvoyl group is generated from an internal serine residue via an autocatalytic post-translational modification. Two non-identical subunits are generated from the proenzyme in this reaction, and the pyruvate is formed at the N-terminus of the alpha chain, which is derived from the carboxyl end of the proenzyme. The autoendoproteolytic cleavage occurs by a canonical serine protease mechanism, in which the side chain hydroxyl group of the serine supplies its oxygen atom to form the C-terminus of the beta chain, while the remainder of the serine residue undergoes an oxidative deamination to produce ammonia and the pyruvoyl prosthetic group on the alpha chain. During this reaction, the Ser that is part of the protease active site of the proenzyme becomes the pyruvoyl prosthetic group, which constitutes an essential element of the active site of the mature decarboxylase.

It localises to the cell membrane. The enzyme catalyses a 1,2-diacyl-sn-glycero-3-phospho-L-serine + H(+) = a 1,2-diacyl-sn-glycero-3-phosphoethanolamine + CO2. It participates in phospholipid metabolism; phosphatidylethanolamine biosynthesis; phosphatidylethanolamine from CDP-diacylglycerol: step 2/2. Catalyzes the formation of phosphatidylethanolamine (PtdEtn) from phosphatidylserine (PtdSer). In Geobacillus sp. (strain WCH70), this protein is Phosphatidylserine decarboxylase proenzyme.